Here is a 612-residue protein sequence, read N- to C-terminus: Dihydroxy-acid dehydratase (612 aa).

Aspartate 81 is a Mg(2+) binding site. Residue cysteine 122 coordinates [2Fe-2S] cluster. Aspartate 123 and lysine 124 together coordinate Mg(2+). Lysine 124 bears the N6-carboxylysine mark. Cysteine 193 contacts [2Fe-2S] cluster. Glutamate 489 serves as a coordination point for Mg(2+). Serine 515 acts as the Proton acceptor in catalysis.

This sequence belongs to the IlvD/Edd family. In terms of assembly, homodimer. It depends on [2Fe-2S] cluster as a cofactor. Mg(2+) is required as a cofactor.

The catalysed reaction is (2R)-2,3-dihydroxy-3-methylbutanoate = 3-methyl-2-oxobutanoate + H2O. It catalyses the reaction (2R,3R)-2,3-dihydroxy-3-methylpentanoate = (S)-3-methyl-2-oxopentanoate + H2O. It participates in amino-acid biosynthesis; L-isoleucine biosynthesis; L-isoleucine from 2-oxobutanoate: step 3/4. It functions in the pathway amino-acid biosynthesis; L-valine biosynthesis; L-valine from pyruvate: step 3/4. Functions in the biosynthesis of branched-chain amino acids. Catalyzes the dehydration of (2R,3R)-2,3-dihydroxy-3-methylpentanoate (2,3-dihydroxy-3-methylvalerate) into 2-oxo-3-methylpentanoate (2-oxo-3-methylvalerate) and of (2R)-2,3-dihydroxy-3-methylbutanoate (2,3-dihydroxyisovalerate) into 2-oxo-3-methylbutanoate (2-oxoisovalerate), the penultimate precursor to L-isoleucine and L-valine, respectively. This chain is Dihydroxy-acid dehydratase, found in Xanthomonas axonopodis pv. citri (strain 306).